The following is a 706-amino-acid chain: Translation initiation factor IF-2 (706 aa).

A compositionally biased stretch (basic and acidic residues) spans 55-81 (AKETANEKPAEQKKQSSNKINDRKKND). A disordered region spans residues 55 to 127 (AKETANEKPA…KPKKELPEKI (73 aa)). Over residues 82–98 (VQNNQFNKNKKNNNQNK) the composition is skewed to low complexity. The 170-residue stretch at 207-376 (VRPPVVTIMG…LLVSEVGELK (170 aa)) folds into the tr-type G domain. A G1 region spans residues 216–223 (GHVDHGKT). 216-223 (GHVDHGKT) provides a ligand contact to GTP. The interval 241–245 (GITQH) is G2. A G3 region spans residues 262-265 (DTPG). Residues 262 to 266 (DTPGH) and 316 to 319 (NKID) contribute to the GTP site. The segment at 316 to 319 (NKID) is G4. Residues 352–354 (SAK) are G5.

It belongs to the TRAFAC class translation factor GTPase superfamily. Classic translation factor GTPase family. IF-2 subfamily.

It localises to the cytoplasm. In terms of biological role, one of the essential components for the initiation of protein synthesis. Protects formylmethionyl-tRNA from spontaneous hydrolysis and promotes its binding to the 30S ribosomal subunits. Also involved in the hydrolysis of GTP during the formation of the 70S ribosomal complex. The protein is Translation initiation factor IF-2 of Bacillus pumilus (strain SAFR-032).